The following is a 146-amino-acid chain: Leghemoglobin 1 (146 aa).

Positions 2-146 constitute a Globin domain; the sequence is GFTEKQEALV…LAAAIKKAMG (145 aa). Y29 is modified (nitrated tyrosine). S44 is a heme b binding site. S44 is modified (phosphoserine). H61 is a binding site for O2. Residues K64, H93, and K96 each coordinate heme b. At Y134 the chain carries Nitrated tyrosine.

Belongs to the plant globin family. Monomer. In terms of processing, nitrated in effective nodules and particularly in hypoxic conditions; this mechanism may play a protective role in the symbiosis by buffering toxic peroxynitrite NO(2)(-). Nitration level decrease during nodule senescence. Post-translationally, phosphorylation at Ser-44 disrupts the molecular environment of its porphyrin ring oxygen binding pocket, thus leading to a reduced oxygen consumption and to the delivery of oxygen O(2) to symbiosomes. Root nodules.

It localises to the cytoplasm. It is found in the cytosol. Its subcellular location is the nucleus. Leghemoglobin that reversibly binds oxygen O(2) through a pentacoordinated heme iron. In root nodules, facilitates the diffusion of oxygen to the bacteroids while preventing the bacterial nitrogenase from being inactivated by buffering dioxygen, nitric oxide and carbon monoxide, and promoting the formation of reactive oxygen species (ROS, e.g. H(2)O(2)). This role is essential for symbiotic nitrogen fixation (SNF). This Medicago truncatula (Barrel medic) protein is Leghemoglobin 1.